Here is a 102-residue protein sequence, read N- to C-terminus: Integration host factor subunit alpha (102 aa).

Residues 49 to 70 (FGNFQLRTKPQRPGRNPKTGEE) form a disordered region.

This sequence belongs to the bacterial histone-like protein family. As to quaternary structure, heterodimer of an alpha and a beta chain.

In terms of biological role, this protein is one of the two subunits of integration host factor, a specific DNA-binding protein that functions in genetic recombination as well as in transcriptional and translational control. In Nitrosomonas europaea (strain ATCC 19718 / CIP 103999 / KCTC 2705 / NBRC 14298), this protein is Integration host factor subunit alpha.